Here is a 129-residue protein sequence, read N- to C-terminus: ALK and LTK ligand 1 (129 aa).

Residues 1–27 (MRPLKPGAPLPALFLLALALSPHGAHG) form the signal peptide. Positions 24-63 (GAHGRPRGRRGARVTDKEPKPLLFLPAAGAGRTPSGSRSA) are disordered. Residues 25-35 (AHGRPRGRRGA) show a composition bias toward basic residues. 2 disulfide bridges follow: Cys90/Cys126 and Cys104/Cys113.

Belongs to the ALKAL family. In terms of tissue distribution, widely expressed with highest levels in thyroid and moderate levels in stomach, trachea, small intestine, prostate and brain.

Its subcellular location is the secreted. It is found in the cell membrane. In terms of biological role, cytokine that acts as a physiological ligand for receptor tyrosine kinase LTK, leading to its activation. Monomeric ALKAL1 binds to LTK, leading to LTK homodimerization and activation. In contrast to ALKAL2, does not act as a potent physiological ligand for ALK. This Homo sapiens (Human) protein is ALK and LTK ligand 1.